The following is a 359-amino-acid chain: 5-amino-6-(D-ribitylamino)uracil--L-tyrosine 4-hydroxyphenyl transferase (359 aa).

A Radical SAM core domain is found at 45–282; that stretch reads VTYVVNANIN…TYAVSRIFFK (238 aa). Residues Cys59, Cys63, and Cys66 each contribute to the [4Fe-4S] cluster site.

This sequence belongs to the radical SAM superfamily. CofH family. In terms of assembly, consists of two subunits, CofG and CofH. The cofactor is [4Fe-4S] cluster.

It catalyses the reaction 5-amino-6-(D-ribitylamino)uracil + L-tyrosine + S-adenosyl-L-methionine = 5-amino-5-(4-hydroxybenzyl)-6-(D-ribitylimino)-5,6-dihydrouracil + 2-iminoacetate + 5'-deoxyadenosine + L-methionine + H(+). It participates in cofactor biosynthesis; coenzyme F0 biosynthesis. Catalyzes the radical-mediated synthesis of 5-amino-5-(4-hydroxybenzyl)-6-(D-ribitylimino)-5,6-dihydrouracil from 5-amino-6-(D-ribitylamino)uracil and L-tyrosine. The sequence is that of 5-amino-6-(D-ribitylamino)uracil--L-tyrosine 4-hydroxyphenyl transferase from Methanococcus maripaludis (strain C6 / ATCC BAA-1332).